Here is a 394-residue protein sequence, read N- to C-terminus: Bifunctional enzyme IspD/IspF (394 aa).

The segment at 1-230 (MADTLAIVVA…AEALLGGGPV (230 aa)) is 2-C-methyl-D-erythritol 4-phosphate cytidylyltransferase. Positions 231–394 (LVGFGYDVHR…RIVLPGDRVL (164 aa)) are 2-C-methyl-D-erythritol 2,4-cyclodiphosphate synthase. A divalent metal cation contacts are provided by Asp237 and His239. 4-CDP-2-C-methyl-D-erythritol 2-phosphate contacts are provided by residues 237–239 (DVH) and 263–264 (HS). His271 contacts a divalent metal cation. 4-CDP-2-C-methyl-D-erythritol 2-phosphate is bound by residues 285–287 (DIG), 290–294 (FPDDD), 361–364 (TTTE), and Phe368.

In the N-terminal section; belongs to the IspD/TarI cytidylyltransferase family. IspD subfamily. It in the C-terminal section; belongs to the IspF family. A divalent metal cation is required as a cofactor.

The catalysed reaction is 2-C-methyl-D-erythritol 4-phosphate + CTP + H(+) = 4-CDP-2-C-methyl-D-erythritol + diphosphate. It catalyses the reaction 4-CDP-2-C-methyl-D-erythritol 2-phosphate = 2-C-methyl-D-erythritol 2,4-cyclic diphosphate + CMP. It functions in the pathway isoprenoid biosynthesis; isopentenyl diphosphate biosynthesis via DXP pathway; isopentenyl diphosphate from 1-deoxy-D-xylulose 5-phosphate: step 2/6. Its pathway is isoprenoid biosynthesis; isopentenyl diphosphate biosynthesis via DXP pathway; isopentenyl diphosphate from 1-deoxy-D-xylulose 5-phosphate: step 4/6. Its function is as follows. Bifunctional enzyme that catalyzes the formation of 4-diphosphocytidyl-2-C-methyl-D-erythritol from CTP and 2-C-methyl-D-erythritol 4-phosphate (MEP) (IspD), and catalyzes the conversion of 4-diphosphocytidyl-2-C-methyl-D-erythritol 2-phosphate (CDP-ME2P) to 2-C-methyl-D-erythritol 2,4-cyclodiphosphate (ME-CPP) with a corresponding release of cytidine 5-monophosphate (CMP) (IspF). In Desulforudis audaxviator (strain MP104C), this protein is Bifunctional enzyme IspD/IspF.